The sequence spans 404 residues: AT-hook motif nuclear-localized protein 6 (404 aa).

A disordered region spans residues 40-112 (TTVVTPLPPP…TPISSSIPLS (73 aa)). Over residues 45-55 (PLPPPPAPSSA) the composition is skewed to pro residues. Positions 56-70 (PVPTTVTPGSATAST) are enriched in low complexity. Positions 76-84 (KKKRGRPRK) match the Bipartite nuclear localization signal motif. Positions 76–88 (KKKRGRPRKYAPD) form a DNA-binding region, a.T hook. Positions 98–112 (PTLSPTPISSSIPLS) are enriched in low complexity. The PPC domain occupies 157–299 (GANFTTHQFT…RVMEAFAPPQ (143 aa)). The interval 365-404 (AYHGYGNMNTGTTHKEEHEDEDGGDDDDDSGDTRSQSHSG) is disordered. A compositionally biased stretch (acidic residues) spans 382 to 394 (HEDEDGGDDDDDS).

The protein localises to the nucleus. In terms of biological role, transcription factor that specifically binds AT-rich DNA sequences related to the nuclear matrix attachment regions (MARs). This Arabidopsis thaliana (Mouse-ear cress) protein is AT-hook motif nuclear-localized protein 6.